We begin with the raw amino-acid sequence, 297 residues long: Acetyl-coenzyme A carboxylase carboxyl transferase subunit beta (297 aa).

One can recognise a CoA carboxyltransferase N-terminal domain in the interval 25-294 (LWVKCPETGQ…LPPKGRLPRP (270 aa)).

Belongs to the AccD/PCCB family. Acetyl-CoA carboxylase is a heterohexamer composed of biotin carboxyl carrier protein (AccB), biotin carboxylase (AccC) and two subunits each of ACCase subunit alpha (AccA) and ACCase subunit beta (AccD).

The protein localises to the cytoplasm. It catalyses the reaction N(6)-carboxybiotinyl-L-lysyl-[protein] + acetyl-CoA = N(6)-biotinyl-L-lysyl-[protein] + malonyl-CoA. It functions in the pathway lipid metabolism; malonyl-CoA biosynthesis; malonyl-CoA from acetyl-CoA: step 1/1. Its function is as follows. Component of the acetyl coenzyme A carboxylase (ACC) complex. Biotin carboxylase (BC) catalyzes the carboxylation of biotin on its carrier protein (BCCP) and then the CO(2) group is transferred by the transcarboxylase to acetyl-CoA to form malonyl-CoA. This Xanthobacter autotrophicus (strain ATCC BAA-1158 / Py2) protein is Acetyl-coenzyme A carboxylase carboxyl transferase subunit beta.